The chain runs to 375 residues: Probable Na(+)/H(+) antiporter GerT (375 aa).

The next 10 membrane-spanning stretches (helical) occupy residues Pro-27–Ile-47, Ala-89–Ile-109, His-112–Leu-132, Thr-145–Met-165, Ile-183–Met-203, Leu-204–Phe-224, Tyr-226–Ile-246, Pro-261–Phe-281, Leu-288–Leu-308, and Glu-350–Leu-370.

The protein belongs to the monovalent cation:proton antiporter 2 (CPA2) transporter (TC 2.A.37) family.

Its subcellular location is the membrane. Contributes to the success of spore outgrowth from the germinated state during alkaline or Na(+) stress. Does not have a significant role in germination. The sequence is that of Probable Na(+)/H(+) antiporter GerT (gerT) from Bacillus cereus.